The chain runs to 233 residues: MAGKRTQKINEGVDPTKLYALTLAIGMVKERAVAKFDETIEVSMNLGVDPRHADQMVRGVVNLPNGTGRTVRVAVFARGAKADEAKAAGADIVGAEDLVEIVQGGKIEFDRCIATPDMMPLVGRLGKVLGPRGMMPNPKVGTVTMDVAGAVKASKGGAVEFRVEKAGIVHAGIGKASFDAKALEENIRAFADAVIKAKPAGAKGNYVKRVAISSTMGPGVKIEPGSVTGAPAA.

Belongs to the universal ribosomal protein uL1 family. Part of the 50S ribosomal subunit.

In terms of biological role, binds directly to 23S rRNA. The L1 stalk is quite mobile in the ribosome, and is involved in E site tRNA release. Protein L1 is also a translational repressor protein, it controls the translation of the L11 operon by binding to its mRNA. The polypeptide is Large ribosomal subunit protein uL1 (Rhizobium johnstonii (strain DSM 114642 / LMG 32736 / 3841) (Rhizobium leguminosarum bv. viciae)).